Reading from the N-terminus, the 884-residue chain is Protein argonaute-4 (884 aa).

Residues 242–361 (PVIEFMCEVL…LPLEVCNIVA (120 aa)) enclose the PAZ domain. The Piwi domain maps to 532 to 843 (LIVVILPGKT…VAFRARYHLV (312 aa)). The disordered stretch occupies residues 848 to 870 (DSAEGSHVSGQSNGRDPQALAKA).

The protein belongs to the argonaute family. Ago subfamily.

The protein localises to the cytoplasm. Its subcellular location is the P-body. Functionally, required for RNA-mediated gene silencing (RNAi). Binds to short RNAs such as microRNAs (miRNAs) and represses the translation of mRNAs which are complementary to them. Lacks endonuclease activity and does not appear to cleave target mRNAs. The polypeptide is Protein argonaute-4 (ago4) (Xenopus laevis (African clawed frog)).